Consider the following 369-residue polypeptide: O-methyltransferase 12 (369 aa).

S-adenosyl-L-methionine is bound by residues Gly181, Asp204, 229–231, Asp230, Phe231, and Lys244; that span reads GDF. The active-site Proton acceptor is the His248.

Belongs to the class I-like SAM-binding methyltransferase superfamily. Cation-independent O-methyltransferase family. COMT subfamily.

It catalyses the reaction resorcinol + S-adenosyl-L-methionine = 3-methoxyphenol + S-adenosyl-L-homocysteine + H(+). S-adenosyl-L-methionine dependent O-methyltransferase that may be involved in modifying resorcinol ring to synthesize a variant of 4-methyl-5-pentylbenzene-1,3-diol. This Dictyostelium discoideum (Social amoeba) protein is O-methyltransferase 12 (omt12).